Reading from the N-terminus, the 132-residue chain is Small ribosomal subunit protein uS11 (132 aa).

Residues 1-16 show a composition bias toward basic residues; that stretch reads MAAGMKGKRSRRRKER. Residues 1–20 form a disordered region; it reads MAAGMKGKRSRRRKERKNVE.

This sequence belongs to the universal ribosomal protein uS11 family. Part of the 30S ribosomal subunit. Interacts with proteins S7 and S18. Binds to IF-3.

Functionally, located on the platform of the 30S subunit, it bridges several disparate RNA helices of the 16S rRNA. Forms part of the Shine-Dalgarno cleft in the 70S ribosome. The sequence is that of Small ribosomal subunit protein uS11 from Clostridium botulinum (strain Hall / ATCC 3502 / NCTC 13319 / Type A).